A 338-amino-acid polypeptide reads, in one-letter code: GTPase Obg (338 aa).

An Obg domain is found at 1 to 159 (MSFIDEVKIH…RWLRLELKLM (159 aa)). The region spanning 160–331 (ADVGLLGMPS…LLDEIARNLW (172 aa)) is the OBG-type G domain. GTP contacts are provided by residues 166–173 (GMPSVGKS), 191–195 (FTTLK), 213–216 (DIPG), 283–286 (NKID), and 312–314 (SAA). Mg(2+) contacts are provided by S173 and T193.

Belongs to the TRAFAC class OBG-HflX-like GTPase superfamily. OBG GTPase family. As to quaternary structure, monomer. Mg(2+) serves as cofactor.

It is found in the cytoplasm. An essential GTPase which binds GTP, GDP and possibly (p)ppGpp with moderate affinity, with high nucleotide exchange rates and a fairly low GTP hydrolysis rate. Plays a role in control of the cell cycle, stress response, ribosome biogenesis and in those bacteria that undergo differentiation, in morphogenesis control. This chain is GTPase Obg, found in Geotalea uraniireducens (strain Rf4) (Geobacter uraniireducens).